A 120-amino-acid polypeptide reads, in one-letter code: Seripauperin-10 (120 aa).

The signal sequence occupies residues 1-20 (MVKLTSIAAGVAAIAATASA).

This sequence belongs to the SRP1/TIP1 family. Seripauperin subfamily.

The sequence is that of Seripauperin-10 (PAU10) from Saccharomyces cerevisiae (strain ATCC 204508 / S288c) (Baker's yeast).